An 85-amino-acid chain; its full sequence is Small muscular protein (85 aa).

Positions 19–63 are disordered; it reads PMGAFRPGAGQPPRRKESTPGTAEGAPATPEEKKPVPGMKKFPGP. Phosphoserine is present on Ser-36. Thr-47 carries the post-translational modification Phosphothreonine.

This sequence belongs to the SMPX family.

In terms of biological role, plays a role in the regulatory network through which muscle cells coordinate their structural and functional states during growth, adaptation, and repair. In Rattus norvegicus (Rat), this protein is Small muscular protein (Smpx).